The chain runs to 214 residues: MRTDDLIDALAADAGRGTEPAPPRRLALVAGLGGVAALLLVLGWLQARPDLGQAILGPMFWVKAIYTGLLGLAGYLAVERLSRPGGSGRRGWIIGAVVFGACAVAGIYQAITSPDVQAALKLLHGYSWRSCSPRILVLGLPMLALGLWALRGMAPTRPGLAGFAMGLFSGGVVATLYGLHCPEHTFTFLALWYSLGVLALGLIGGWAGRWLLRW.

Over 1 to 25 (MRTDDLIDALAADAGRGTEPAPPRR) the chain is Cytoplasmic. A helical membrane pass occupies residues 26–46 (LALVAGLGGVAALLLVLGWLQ). Residues 47–53 (ARPDLGQ) are Periplasmic-facing. A helical membrane pass occupies residues 54 to 74 (AILGPMFWVKAIYTGLLGLAG). Over 75–90 (YLAVERLSRPGGSGRR) the chain is Cytoplasmic. Residues 91–111 (GWIIGAVVFGACAVAGIYQAI) traverse the membrane as a helical segment. The Periplasmic segment spans residues 112–134 (TSPDVQAALKLLHGYSWRSCSPR). A helical transmembrane segment spans residues 135–155 (ILVLGLPMLALGLWALRGMAP). The Cytoplasmic portion of the chain corresponds to 156–158 (TRP). The chain crosses the membrane as a helical span at residues 159 to 179 (GLAGFAMGLFSGGVVATLYGL). Residues 180–185 (HCPEHT) lie on the Periplasmic side of the membrane. Residues 186–206 (FTFLALWYSLGVLALGLIGGW) traverse the membrane as a helical segment. The Cytoplasmic portion of the chain corresponds to 207–214 (AGRWLLRW).

The protein belongs to the NrsF anti-sigma-F factor family.

The protein localises to the cell inner membrane. An anti-sigma factor for extracytoplasmic function (ECF) sigma factor sigma-F (SigF), which responds to chromate and cadmium. Overexpression leads to loss of response to dichromate. ECF sigma factors are held in an inactive form by a cognate anti-sigma factor. This is Anti-sigma-F factor NrsF from Caulobacter vibrioides (strain NA1000 / CB15N) (Caulobacter crescentus).